We begin with the raw amino-acid sequence, 204 residues long: Recombination protein RecR (204 aa).

The C4-type zinc-finger motif lies at 58-75 (CSICQNVTDRDADPCRIC). In terms of domain architecture, Toprim spans 83 to 181 (SVICVVESPV…MVTKIARGIP (99 aa)).

Belongs to the RecR family.

In terms of biological role, may play a role in DNA repair. It seems to be involved in an RecBC-independent recombinational process of DNA repair. It may act with RecF and RecO. The protein is Recombination protein RecR of Chlorobium phaeovibrioides (strain DSM 265 / 1930) (Prosthecochloris vibrioformis (strain DSM 265)).